The chain runs to 174 residues: Elongation factor Tu, mitochondrial (174 aa).

Position 62–66 (62–66) interacts with GTP; sequence DCPGH. Residue Lys-78 is modified to N6-succinyllysine. Position 103 is a phosphothreonine (Thr-103). Ser-121 is modified (phosphoserine). At Lys-161 the chain carries N6-acetyllysine.

It belongs to the GTP-binding elongation factor family. EF-Tu/EF-1A subfamily.

Its subcellular location is the mitochondrion. The catalysed reaction is GTP + H2O = GDP + phosphate + H(+). Its function is as follows. GTP hydrolase that promotes the GTP-dependent binding of aminoacyl-tRNA to the A-site of ribosomes during protein biosynthesis. This Mesocricetus auratus (Golden hamster) protein is Elongation factor Tu, mitochondrial.